The sequence spans 697 residues: MARTTPLERMRNIGIAAHIDAGKTTTTERILFYTGKSHKIGEVHEGTAVMDWMEQEQERGITITSAATTCEWRDIQINIIDTPGHVDFTAEVERSLRVLDGAVAVFDAVAGVQPQSETVWRQADKYSVPRICFINKMDRVGADFYHSVDTIVDRLKCRPVPIQLPIGAEEKFLGIVDLVEMRGIIWRDETMGAKYDVIEIPDDLKDKAKEYREHMIEAISEHDEALMHKFIEGQPISNDEIRAGIRKATIALQIFPVICGTAFKNKGVQTMLDAVVDYLPSPLDVPAIEGLDVDDPEKTLIRHASDNEPFSALVFKIMTDPYVGQLAFFRVYSGSMKSGGSVFNVAKRRNERVGRLLRMHANKREEIQEIFAGDICAAVGLKTISTGDTICDDAHPIVLEAIDFPMPVIQLAVEPKTKADQEKMGMAIQKLAQEDPTFRVYTDPETGQTILSGMGELHLEIIVDRMMREFGVGANVGKPQVAYRETIRKNSEAEGRHVKQTGGHGQYGHVKIRVEPLPSGTGFEFVNDVTGGRIPKEYINPTEMGIKEALEGGILAGYPMSDVKVTLYDGSYHDVDSSEMAFKIAGSMAIKEAAKRAKPVLLEPIMAVEVVVPEDYMGDVIGDLYGRRGRIEGTELRGNTRIIKSMVPLSAMFGYATDIRSRTQGRGSFTMHFGKYEEVPAAQAEEIVSKVQGKTTR.

One can recognise a tr-type G domain in the interval 8–283; it reads ERMRNIGIAA…AVVDYLPSPL (276 aa). GTP contacts are provided by residues 17–24, 81–85, and 135–138; these read AHIDAGKT, DTPGH, and NKMD.

This sequence belongs to the TRAFAC class translation factor GTPase superfamily. Classic translation factor GTPase family. EF-G/EF-2 subfamily.

It localises to the cytoplasm. Its function is as follows. Catalyzes the GTP-dependent ribosomal translocation step during translation elongation. During this step, the ribosome changes from the pre-translocational (PRE) to the post-translocational (POST) state as the newly formed A-site-bound peptidyl-tRNA and P-site-bound deacylated tRNA move to the P and E sites, respectively. Catalyzes the coordinated movement of the two tRNA molecules, the mRNA and conformational changes in the ribosome. The sequence is that of Elongation factor G from Solibacter usitatus (strain Ellin6076).